A 2245-amino-acid chain; its full sequence is Myosin-J heavy chain (2245 aa).

The 53-residue stretch at 25–77 (QEGAGVWIPDQELGWIGADVIEHSETSADQVLVRTEDDREVKIPLSKVFQKNP) folds into the Myosin N-terminal SH3-like domain. The region spanning 81 to 821 (EGVDDLSFLS…QLASLEDMRL (741 aa)) is the Myosin motor domain. Position 174–181 (174–181 (GESGAGKT)) interacts with ATP. Residues 646–672 (FTQSPGGHPQGNGGPTSSNTKGTSGSS) form a disordered region. The span at 660–672 (PTSSNTKGTSGSS) shows a compositional bias: low complexity. The interval 669 to 749 (SGSSSMKFLS…GFPTRRLLSE (81 aa)) is actin-binding. IQ domains follow at residues 824–851 (LDRS…RDAS), 872–901 (RTHS…ASLQ), and 943–972 (KLRG…EARS). The stretch at 973 to 1812 (LRTVQEQKNK…NYHMLEDRME (840 aa)) forms a coiled coil. The interval 1504-1524 (KKQLTQLQQQHEQSSTQLLLA) is disordered. Positions 1506 to 1523 (QLTQLQQQHEQSSTQLLL) are enriched in low complexity. The 220-residue stretch at 1969–2188 (IDFIDQLQQS…IASICPPNKS (220 aa)) folds into the Dilute domain.

This sequence belongs to the TRAFAC class myosin-kinesin ATPase superfamily. Myosin family. As to quaternary structure, homodimer that associates with six light chains.

The protein resides in the contractile vacuole. Processive motor protein that can move over long distances along F-actin without disassociating; processiveness depends on high physiological Mg(2+) concentrations. Presents a high actin affinity in the presence of ADP, fast ATP hydrolysis, and a high steady-state ATPase activity in the presence of actin that is rate limited by ADP release. Physiological decrease of free Mg(2+) ions leads to an increased rate of ADP release and shortening of the fraction of time it spends in the strong acting binding states. The sequence is that of Myosin-J heavy chain (myoJ) from Dictyostelium discoideum (Social amoeba).